Reading from the N-terminus, the 412-residue chain is MSTETIPDVRRLRALQAEVHEELTENILKFWATRTHDPVHGGFVGRVGPDGRPHPEAPRGAILNARILWTFAAAYRQLGTPLYREMAERAYRYFVRHFVDAEHGGVYWMVAADGRPLDTRKHVYAQSFAIYALSEWHRATGGEAALALARSIYDLIETHCADRVHGGYVEACDRAWRPLEDARLSAKDAPEPRSMNTHLHVLEAYANLYRVWPETELAARLQALIELFLRAIYHPATGHLILFFDERWRPRSRAVSFGHDIEASWLLLEAVDVLGQATLRPRVQQASLHLARATLAEGRAPDGSLYYEIGEQGHLDTDRHWWPQAEALVGFLNAYQESGEVLFYEAAEDVWRYIRERQRDTRGGEWFARVRDDGAPYPDDKVDFWKGPYHNGRACLEAIQRLRHLLEHVRSR.

Belongs to the cellobiose 2-epimerase family.

The enzyme catalyses D-cellobiose = beta-D-glucosyl-(1-&gt;4)-D-mannopyranose. Catalyzes the reversible epimerization of cellobiose to 4-O-beta-D-glucopyranosyl-D-mannose (Glc-Man). Can also use lactose, epilactose, mannobiose and cellotriose. Highly specific for oligosaccharides linked by the beta-1,4-glycosidic linkage. Shows preference for lactose. This is Cellobiose 2-epimerase (ce) from Rhodothermus marinus (Rhodothermus obamensis).